The sequence spans 545 residues: Transducer protein Htr7 (545 aa).

The next 3 helical transmembrane spans lie at alanine 10 to leucine 30, phenylalanine 44 to leucine 64, and proline 80 to valine 100. The disordered stretch occupies residues alanine 111 to alanine 157. Residues glutamate 123–alanine 157 are compositionally biased toward basic and acidic residues. The HAMP domain maps to alanine 164–aspartate 217. The Methyl-accepting transducer domain maps to glycine 236 to alanine 476. Glutamate 281 carries the glutamate methyl ester (Glu) modification. A disordered region spans residues leucine 521 to aspartate 545. A compositionally biased stretch (low complexity) spans glutamate 527–alanine 539.

This sequence belongs to the methyl-accepting chemotaxis (MCP) protein family. In terms of processing, methylated by CheR.

The protein localises to the cell membrane. Potentially involved in chemo- or phototactic signal transduction. The protein is Transducer protein Htr7 (htr7) of Halobacterium salinarum (strain ATCC 29341 / DSM 671 / R1).